The chain runs to 432 residues: Trigger factor (432 aa).

The region spanning 163-248 (GDIAVIDFEG…LKALNKKELP (86 aa)) is the PPIase FKBP-type domain.

It belongs to the FKBP-type PPIase family. Tig subfamily.

Its subcellular location is the cytoplasm. The enzyme catalyses [protein]-peptidylproline (omega=180) = [protein]-peptidylproline (omega=0). Involved in protein export. Acts as a chaperone by maintaining the newly synthesized protein in an open conformation. Functions as a peptidyl-prolyl cis-trans isomerase. The chain is Trigger factor from Caldanaerobacter subterraneus subsp. tengcongensis (strain DSM 15242 / JCM 11007 / NBRC 100824 / MB4) (Thermoanaerobacter tengcongensis).